The following is a 1151-amino-acid chain: ATP-dependent RNA helicase ddx46 (1151 aa).

Composition is skewed to basic and acidic residues over residues 1 to 26 and 35 to 51; these read MDEY…DNRN and YRDD…DRSH. Disordered stretches follow at residues 1–138, 166–224, 287–358, and 424–449; these read MDEY…SRFD, MYQQ…VFQQ, QELK…PLVN, and TSQM…DKTI. Residues 52–73 are compositionally biased toward low complexity; the sequence is YNNNNNNNNNNNNNNNNNNGNG. The segment covering 81 to 90 has biased composition (polar residues); it reads SSQNKYQNHH. Composition is skewed to low complexity over residues 91–124, 166–199, 207–224, and 291–339; these read QQSP…QPHI, MYQQ…FQHH, QPPV…VFQQ, and ASGS…TTSP. Residues 428 to 443 are compositionally biased toward acidic residues; it reads IDDDEKLEEESEGEDD. Residues 509 to 537 carry the Q motif motif; it reads QSWAQAGLTEKVHLLLKKFQYEKPTSIQA. The Helicase ATP-binding domain occupies 540–718; it reads IPAIMNGRDL…KKILNKPLEI (179 aa). Residue 553–560 participates in ATP binding; the sequence is ARTGSGKT. The short motif at 666 to 669 is the DEAD box element; it reads DEAD. The 162-residue stretch at 729 to 890 folds into the Helicase C-terminal domain; the sequence is DIEQFVEVRP…KVPDELRKLN (162 aa). The segment at 904 to 972 is disordered; that stretch reads LLAPTGFTGR…EKEKQLLSEK (69 aa). The span at 915–930 shows a compositional bias: basic and acidic residues; it reads HKFDAAEEDKKNIERK. The span at 938–948 shows a compositional bias: acidic residues; sequence IEEEEEEEDED. The span at 949–972 shows a compositional bias: basic and acidic residues; that stretch reads KEKAEKEKLAAASAEKEKQLLSEK.

Belongs to the DEAD box helicase family. DDX46/PRP5 subfamily. In terms of assembly, component of the 17S U2 SnRNP complex, a ribonucleoprotein complex that contains small nuclear RNA (snRNA) U2 and a number of specific proteins.

Its subcellular location is the nucleus speckle. The enzyme catalyses ATP + H2O = ADP + phosphate + H(+). In terms of biological role, component of the 17S U2 SnRNP complex of the spliceosome, a large ribonucleoprotein complex that removes introns from transcribed pre-mRNAs. The protein is ATP-dependent RNA helicase ddx46 (helB1) of Dictyostelium discoideum (Social amoeba).